The chain runs to 649 residues: Replication factor C small subunit (649 aa).

Glycine 55–threonine 385 is a binding site for ATP.

This sequence belongs to the activator 1 small subunits family. RfcS subfamily. As to quaternary structure, heteromultimer composed of small subunits (RfcS) and large subunits (RfcL). In terms of processing, this protein undergoes a protein self splicing that involves a post-translational excision of the intervening region (intein) followed by peptide ligation.

Functionally, part of the RFC clamp loader complex which loads the PCNA sliding clamp onto DNA. In Haloquadratum walsbyi (strain DSM 16790 / HBSQ001), this protein is Replication factor C small subunit (rfcS).